The chain runs to 150 residues: Ribosome maturation factor RimP (150 aa).

Belongs to the RimP family.

The protein localises to the cytoplasm. In terms of biological role, required for maturation of 30S ribosomal subunits. This chain is Ribosome maturation factor RimP, found in Francisella tularensis subsp. holarctica (strain LVS).